Reading from the N-terminus, the 452-residue chain is Adenylyltransferase and sulfurtransferase MOCS3 (452 aa).

ATP contacts are provided by residues Gly-99, Asp-120, Ser-127–Arg-131, Lys-144, and Asp-188–Asn-189. Residues Cys-230 and Cys-233 each coordinate Zn(2+). Cys-247 acts as the Glycyl thioester intermediate; for adenylyltransferase activity in catalysis. Cys-305 and Cys-308 together coordinate Zn(2+). One can recognise a Rhodanese domain in the interval Lys-354–Pro-450. The active-site Cysteine persulfide intermediate; for sulfurtransferase activity is the Cys-409.

This sequence in the N-terminal section; belongs to the HesA/MoeB/ThiF family. UBA4 subfamily. The cofactor is Zn(2+).

The protein resides in the cytoplasm. The protein localises to the cytosol. The catalysed reaction is [molybdopterin-synthase sulfur-carrier protein]-C-terminal Gly-Gly + ATP + H(+) = [molybdopterin-synthase sulfur-carrier protein]-C-terminal Gly-Gly-AMP + diphosphate. The enzyme catalyses [molybdopterin-synthase sulfur-carrier protein]-C-terminal Gly-Gly-AMP + S-sulfanyl-L-cysteinyl-[cysteine desulfurase] + AH2 = [molybdopterin-synthase sulfur-carrier protein]-C-terminal-Gly-aminoethanethioate + L-cysteinyl-[cysteine desulfurase] + A + AMP + 2 H(+). The protein operates within tRNA modification; 5-methoxycarbonylmethyl-2-thiouridine-tRNA biosynthesis. Its pathway is cofactor biosynthesis; molybdopterin biosynthesis. Plays a central role in 2-thiolation of mcm(5)S(2)U at tRNA wobble positions of cytosolic tRNA(Lys), tRNA(Glu) and tRNA(Gln). Also essential during biosynthesis of the molybdenum cofactor. Acts by mediating the C-terminal thiocarboxylation of sulfur carriers URM1 and MOCS2A. Its N-terminus first activates URM1 and MOCS2A as acyl-adenylates (-COAMP), then the persulfide sulfur on the catalytic cysteine is transferred to URM1 and MOCS2A to form thiocarboxylation (-COSH) of their C-terminus. The reaction probably involves hydrogen sulfide that is generated from the persulfide intermediate and that acts as a nucleophile towards URM1 and MOCS2A. Subsequently, a transient disulfide bond is formed. Does not use thiosulfate as sulfur donor; NFS1 probably acting as a sulfur donor for thiocarboxylation reactions. In Drosophila virilis (Fruit fly), this protein is Adenylyltransferase and sulfurtransferase MOCS3.